The following is a 452-amino-acid chain: Trigger factor (452 aa).

The PPIase FKBP-type domain maps to 171–256 (GDRVTVSFKG…ATKLEAPQET (86 aa)).

Belongs to the FKBP-type PPIase family. Tig subfamily.

Its subcellular location is the cytoplasm. The enzyme catalyses [protein]-peptidylproline (omega=180) = [protein]-peptidylproline (omega=0). Its function is as follows. Involved in protein export. Acts as a chaperone by maintaining the newly synthesized protein in an open conformation. Functions as a peptidyl-prolyl cis-trans isomerase. This chain is Trigger factor, found in Rhodopseudomonas palustris (strain ATCC BAA-98 / CGA009).